A 262-amino-acid polypeptide reads, in one-letter code: tRNA pseudouridine synthase A (262 aa).

D51 serves as the catalytic Nucleophile. Substrate is bound at residue Y109.

Belongs to the tRNA pseudouridine synthase TruA family. In terms of assembly, homodimer.

It catalyses the reaction uridine(38/39/40) in tRNA = pseudouridine(38/39/40) in tRNA. Functionally, formation of pseudouridine at positions 38, 39 and 40 in the anticodon stem and loop of transfer RNAs. This Actinobacillus pleuropneumoniae serotype 3 (strain JL03) protein is tRNA pseudouridine synthase A.